The primary structure comprises 562 residues: Endochitinase (562 aa).

The first 20 residues, 1-20 (MSLLYIILLFTQFLLLPTDA), serve as a signal peptide directing secretion. The GH18 domain maps to 27-311 (TNIAVYWGQN…EILKNLLTSA (285 aa)). E157 functions as the Proton donor in the catalytic mechanism. Disordered regions lie at residues 329–358 (TSSA…SKVT) and 461–484 (TLSP…SDST). The interval 481–562 (SDSTARTLAK…NFSYLESNYF (82 aa)) is chitin-binding, high affinity. N-linked (GlcNAc...) asparagine glycosylation occurs at N553.

Belongs to the glycosyl hydrolase 18 family. Chitinase class V subfamily. In terms of processing, extensively glycosylated with a series of short O-linked mannose oligosaccharides ranging in size from Man(2) to Man(5).

The protein resides in the secreted. The protein localises to the cell wall. The catalysed reaction is Random endo-hydrolysis of N-acetyl-beta-D-glucosaminide (1-&gt;4)-beta-linkages in chitin and chitodextrins.. Chitinase is required for cell separation during growth of S.cerevisiae. This is Endochitinase (CTS1) from Saccharomyces cerevisiae (strain ATCC 204508 / S288c) (Baker's yeast).